We begin with the raw amino-acid sequence, 1072 residues long: Teashirt homolog 3 (1072 aa).

Disordered stretches follow at residues 44 to 71, 130 to 153, and 228 to 247; these read ACPS…SETS, PSSE…CGSG, and HYRD…WSKP. The segment covering 57-71 has biased composition (basic and acidic residues); it reads SSHEMDSESHISETS. 2 consecutive C2H2-type zinc fingers follow at residues 204 to 228 and 265 to 289; these read FRCK…ETGH and LKCM…KTKH. Residues 228 to 237 are compositionally biased toward basic and acidic residues; sequence HYRDDNHETD. The disordered stretch occupies residues 315-336; the sequence is SLELELPSSPDSTGGTPKATLS. The C2H2-type 3; atypical zinc finger occupies 376–400; it reads LKCMECGSSHDTLQELTAHMMVTGH. Residues 469 to 481 show a composition bias toward basic and acidic residues; that stretch reads AVLDEKPKEKEKA. Disordered stretches follow at residues 469–489, 569–594, 616–690, 784–815, and 846–888; these read AVLD…EKYD, NSEI…PMPK, EKMK…PLSG, TKGK…TVTT, and TESH…RQSN. Composition is skewed to polar residues over residues 571-593 and 649-660; these read EIVS…SPMP and SSGSGFKSQENS. The residue at position 672 (Ser672) is a Phosphoserine. Composition is skewed to low complexity over residues 791 to 815 and 847 to 860; these read GCSL…TVTT and ESHT…SSIS. The segment at residues 882–952 is a DNA-binding region (homeobox; atypical); sequence RKGRQSNWNP…NVKYQLRRTG (71 aa). C2H2-type zinc fingers lie at residues 967–989 and 1032–1055; these read FFCN…LESH and YQCK…SKTH.

It belongs to the teashirt C2H2-type zinc-finger protein family. As to quaternary structure, interacts (via N-terminus) with HDAC1 and HDAC2; the interaction is direct. Found in a trimeric complex with APBB1 and HDAC1; the interaction between HDAC1 and APBB1 is mediated by TSHZ3. Interacts (via homeobox domain) with APBB1 (via PID domain 1). Expressed in cortical neurons.

The protein resides in the nucleus. It is found in the cell projection. It localises to the growth cone. Transcriptional regulator involved in developmental processes. Functions in association with APBB1, SET and HDAC factors as a transcriptional repressor, that inhibits the expression of CASP4. TSHZ3-mediated transcription repression involves the recruitment of histone deacetylases HDAC1 and HDAC2. Associates with chromatin in a region surrounding the CASP4 transcriptional start site(s). Regulates the development of neurons involved in both respiratory rhythm and airflow control. Promotes maintenance of nucleus ambiguus (nA) motoneurons, which govern upper airway function, and establishes a respiratory rhythm generator (RRG) activity compatible with survival at birth. Involved in the differentiation of the proximal uretic smooth muscle cells during developmental processes. Involved in the up-regulation of myocardin, that directs the expression of smooth muscle cells in the proximal ureter. Involved in the modulation of glutamatergic synaptic transmission and long-term synaptic potentiation. This Rattus norvegicus (Rat) protein is Teashirt homolog 3 (Tshz3).